The following is a 253-amino-acid chain: 1-(5-phosphoribosyl)-5-[(5-phosphoribosylamino)methylideneamino] imidazole-4-carboxamide isomerase (253 aa).

The active-site Proton acceptor is the D8. Residue D131 is the Proton donor of the active site.

Belongs to the HisA/HisF family.

It localises to the cytoplasm. The enzyme catalyses 1-(5-phospho-beta-D-ribosyl)-5-[(5-phospho-beta-D-ribosylamino)methylideneamino]imidazole-4-carboxamide = 5-[(5-phospho-1-deoxy-D-ribulos-1-ylimino)methylamino]-1-(5-phospho-beta-D-ribosyl)imidazole-4-carboxamide. It participates in amino-acid biosynthesis; L-histidine biosynthesis; L-histidine from 5-phospho-alpha-D-ribose 1-diphosphate: step 4/9. The protein is 1-(5-phosphoribosyl)-5-[(5-phosphoribosylamino)methylideneamino] imidazole-4-carboxamide isomerase of Polynucleobacter asymbioticus (strain DSM 18221 / CIP 109841 / QLW-P1DMWA-1) (Polynucleobacter necessarius subsp. asymbioticus).